The following is a 132-amino-acid chain: UPF0299 membrane protein YohJ (132 aa).

4 consecutive transmembrane segments (helical) span residues 7–27, 31–51, 63–83, and 93–113; these read IIWQ…AGIF, LLPV…VLLA, GCYV…VGVM, and FGPV…VMSW.

It belongs to the UPF0299 family.

It is found in the cell inner membrane. The polypeptide is UPF0299 membrane protein YohJ (Shigella dysenteriae serotype 1 (strain Sd197)).